Consider the following 60-residue polypeptide: UPF0337 protein SSP1134 (60 aa).

Residues 1 to 41 (MADENKFEQAKGNVKETVGNVTDNKELENEGKEDKTSGKAK) are disordered. Over residues 23–41 (DNKELENEGKEDKTSGKAK) the composition is skewed to basic and acidic residues.

Belongs to the UPF0337 (CsbD) family.

The polypeptide is UPF0337 protein SSP1134 (Staphylococcus saprophyticus subsp. saprophyticus (strain ATCC 15305 / DSM 20229 / NCIMB 8711 / NCTC 7292 / S-41)).